The following is a 108-amino-acid chain: Nucleoid-associated protein Mmwyl1_2533 (108 aa).

The segment at 1–22 is disordered; the sequence is MFKGGMGNMMRQAQQMQENMQK. A compositionally biased stretch (polar residues) spans 11-22; the sequence is RQAQQMQENMQK.

This sequence belongs to the YbaB/EbfC family. As to quaternary structure, homodimer.

It localises to the cytoplasm. Its subcellular location is the nucleoid. In terms of biological role, binds to DNA and alters its conformation. May be involved in regulation of gene expression, nucleoid organization and DNA protection. In Marinomonas sp. (strain MWYL1), this protein is Nucleoid-associated protein Mmwyl1_2533.